The sequence spans 617 residues: Phosphomethylpyrimidine synthase (617 aa).

Residues Asn230, Met259, Tyr288, His324, 344–346, 385–388, and Glu424 contribute to the substrate site; these read SRG and DGLR. His428 contacts Zn(2+). Tyr451 provides a ligand contact to substrate. A Zn(2+)-binding site is contributed by His492. The [4Fe-4S] cluster site is built by Cys572, Cys575, and Cys580.

The protein belongs to the ThiC family. In terms of assembly, homodimer. [4Fe-4S] cluster is required as a cofactor.

The catalysed reaction is 5-amino-1-(5-phospho-beta-D-ribosyl)imidazole + S-adenosyl-L-methionine = 4-amino-2-methyl-5-(phosphooxymethyl)pyrimidine + CO + 5'-deoxyadenosine + formate + L-methionine + 3 H(+). It functions in the pathway cofactor biosynthesis; thiamine diphosphate biosynthesis. Catalyzes the synthesis of the hydroxymethylpyrimidine phosphate (HMP-P) moiety of thiamine from aminoimidazole ribotide (AIR) in a radical S-adenosyl-L-methionine (SAM)-dependent reaction. The polypeptide is Phosphomethylpyrimidine synthase (Paracidovorax citrulli (strain AAC00-1) (Acidovorax citrulli)).